A 111-amino-acid polypeptide reads, in one-letter code: Anti-adapter protein IraM (111 aa).

This sequence belongs to the IraM/RssC family.

It localises to the cytoplasm. In terms of biological role, inhibits RpoS proteolysis by regulating RssB activity, thereby increasing the stability of the sigma stress factor RpoS during magnesium starvation. The protein is Anti-adapter protein IraM of Escherichia coli O127:H6 (strain E2348/69 / EPEC).